We begin with the raw amino-acid sequence, 389 residues long: tRNA-specific 2-thiouridylase MnmA (389 aa).

ATP is bound by residues 35-42 (GMSGGVDS) and M61. Positions 121-123 (NPD) are interaction with target base in tRNA. C126 functions as the Nucleophile in the catalytic mechanism. A disulfide bond links C126 and C223. G151 contributes to the ATP binding site. Positions 173–175 (KDQ) are interaction with tRNA. C223 (cysteine persulfide intermediate) is an active-site residue. The tract at residues 335-336 (RY) is interaction with tRNA.

This sequence belongs to the MnmA/TRMU family.

Its subcellular location is the cytoplasm. The enzyme catalyses S-sulfanyl-L-cysteinyl-[protein] + uridine(34) in tRNA + AH2 + ATP = 2-thiouridine(34) in tRNA + L-cysteinyl-[protein] + A + AMP + diphosphate + H(+). Functionally, catalyzes the 2-thiolation of uridine at the wobble position (U34) of tRNA, leading to the formation of s(2)U34. This Actinobacillus pleuropneumoniae serotype 5b (strain L20) protein is tRNA-specific 2-thiouridylase MnmA.